A 309-amino-acid polypeptide reads, in one-letter code: Taste receptor type 2 member 113 (309 aa).

Over 1–8 the chain is Extracellular; the sequence is MVAVLQST. Residues 9 to 29 form a helical membrane-spanning segment; that stretch reads FAIIFSMEFIVGTLGNGFIIL. The Cytoplasmic portion of the chain corresponds to 30–55; it reads MTCIDWVRRRKISLVDQILTALAITR. A helical membrane pass occupies residues 56–76; that stretch reads ITLILLVFIDWWVSVLFPALH. The Extracellular segment spans residues 77–101; that stretch reads ETGKILRMYFISWTVINHCNLWLTA. Residues 102–122 traverse the membrane as a helical segment; it reads SLSIIYFLKIASFSSIIFLYL. Over 123–127 the chain is Cytoplasmic; that stretch reads KFRVK. The helical transmembrane segment at 128-148 threads the bilayer; it reads NVVFVTLLVSLFFLFINTAIV. Topologically, residues 149 to 185 are extracellular; the sequence is NVYFDVCFDGVQRNVSQVSRLYNHEQICKFLSFTNPM. N-linked (GlcNAc...) asparagine glycosylation occurs at Asn162. The chain crosses the membrane as a helical span at residues 186-206; that stretch reads FAFIPFVTSMATFFLLIFSLW. Residues 207–229 are Cytoplasmic-facing; it reads RHLKNMKHNAEGCRDVSTIVHIR. The helical transmembrane segment at 230 to 250 threads the bilayer; sequence ALQTIIVSVVLYSTFFLSFFV. Topologically, residues 251–262 are extracellular; that stretch reads KVWSSGSPERYL. Residues 263–283 form a helical membrane-spanning segment; the sequence is IFLFVWALGNAVLPAHTFVLI. At 284–309 the chain is on the cytoplasmic side; sequence WGNCRLRWASLSLMLWLRYRFKNIDV.

It belongs to the G-protein coupled receptor T2R family.

It is found in the membrane. Its function is as follows. Putative taste receptor which may play a role in the perception of bitterness. In Rattus norvegicus (Rat), this protein is Taste receptor type 2 member 113.